The primary structure comprises 238 residues: MRPSKRAADEMRTISFERGVSKHAEGSCLVKFGDTHVLCTASLEEKVPGWMRNTGKGWVTAEYGMLPRSTGERMRREAAAGKQGGRTQEIQRLIGRSLRAVVDMQALGEMQITVDCDVIQADGGTRTAAITGGWVALHECLRWMEARQMVRVEKVLKDHVAAISCGIYEGVPVLDLDYAEDSVAETDSNFVMTGKGGIVEIQGTAEGVPFSEEEFGALMKLARSGIDRLVSLQKMAVA.

Phosphate-binding positions include Arg86 and 124–126; that span reads GTR.

Belongs to the RNase PH family. In terms of assembly, homohexameric ring arranged as a trimer of dimers.

The catalysed reaction is tRNA(n+1) + phosphate = tRNA(n) + a ribonucleoside 5'-diphosphate. Functionally, phosphorolytic 3'-5' exoribonuclease that plays an important role in tRNA 3'-end maturation. Removes nucleotide residues following the 3'-CCA terminus of tRNAs; can also add nucleotides to the ends of RNA molecules by using nucleoside diphosphates as substrates, but this may not be physiologically important. Probably plays a role in initiation of 16S rRNA degradation (leading to ribosome degradation) during starvation. The sequence is that of Ribonuclease PH from Brucella melitensis biotype 2 (strain ATCC 23457).